The sequence spans 343 residues: Calcium/calmodulin-dependent protein kinase type 1B (343 aa).

The Protein kinase domain occupies 15-270 (YEIREKLGSG…CQQALQHLWI (256 aa)). ATP-binding positions include 21-29 (LGSGAFSEV) and lysine 44. The active-site Proton acceptor is the aspartate 136. A calmodulin-binding region spans residues 290–311 (KNFARTHWKRAFNATSFLRHIR). The tract at residues 314-343 (GQSPEGEEASRQGMTRHSHPGLGTSQSPKW) is disordered. Serine 338 carries the phosphoserine modification.

It belongs to the protein kinase superfamily. CAMK Ser/Thr protein kinase family. CaMK subfamily. Post-translationally, isoform 1 and isoform 2 are phosphorylated by CAMKK1. In terms of tissue distribution, isoform 1 is expressed in liver, heart, lung, kidney, spleen and testis. Isoform 2 is predominantly expressed in cerebrum and cerebellum.

It is found in the cytoplasm. Its subcellular location is the nucleus. The enzyme catalyses L-seryl-[protein] + ATP = O-phospho-L-seryl-[protein] + ADP + H(+). The catalysed reaction is L-threonyl-[protein] + ATP = O-phospho-L-threonyl-[protein] + ADP + H(+). With respect to regulation, activated by Ca(2+)/calmodulin. Must be phosphorylated to be maximally active. Activated by CAMKK1. In terms of biological role, calcium/calmodulin-dependent protein kinase belonging to a proposed calcium-triggered signaling cascade. In vitro, isoform 1 and isoform 2 phosphorylate CREB1, SYN1/synapsin I. Phosphorylates and activates CAMK1. This chain is Calcium/calmodulin-dependent protein kinase type 1B (Pnck), found in Rattus norvegicus (Rat).